Reading from the N-terminus, the 104-residue chain is Large ribosomal subunit protein uL24 (104 aa).

This sequence belongs to the universal ribosomal protein uL24 family. In terms of assembly, part of the 50S ribosomal subunit.

In terms of biological role, one of two assembly initiator proteins, it binds directly to the 5'-end of the 23S rRNA, where it nucleates assembly of the 50S subunit. Its function is as follows. One of the proteins that surrounds the polypeptide exit tunnel on the outside of the subunit. The polypeptide is Large ribosomal subunit protein uL24 (Shewanella piezotolerans (strain WP3 / JCM 13877)).